The sequence spans 335 residues: Malate dehydrogenase (335 aa).

NAD(+) is bound at residue 11–17 (GAAGQIG). Positions 94 and 100 each coordinate substrate. NAD(+)-binding positions include Asn-107, Gln-114, and 131–133 (VGN). Substrate-binding residues include Asn-133 and Arg-167. The active-site Proton acceptor is the His-192.

It belongs to the LDH/MDH superfamily. MDH type 2 family.

It carries out the reaction (S)-malate + NAD(+) = oxaloacetate + NADH + H(+). Its function is as follows. Catalyzes the reversible oxidation of malate to oxaloacetate. The polypeptide is Malate dehydrogenase (Bdellovibrio bacteriovorus (strain ATCC 15356 / DSM 50701 / NCIMB 9529 / HD100)).